Here is a 150-residue protein sequence, read N- to C-terminus: Large ribosomal subunit protein uL13 (150 aa).

The interval 130–150 (EHPHAAQQPKTLQLDPAASAQ) is disordered.

It belongs to the universal ribosomal protein uL13 family. As to quaternary structure, part of the 50S ribosomal subunit.

Functionally, this protein is one of the early assembly proteins of the 50S ribosomal subunit, although it is not seen to bind rRNA by itself. It is important during the early stages of 50S assembly. The chain is Large ribosomal subunit protein uL13 from Synechococcus sp. (strain CC9311).